The chain runs to 483 residues: (R)-mandelonitrile beta-glucosyltransferase (483 aa).

His-22 acts as the Proton acceptor in catalysis. Position 22 (His-22) interacts with an anthocyanidin. Residue Asp-124 is the Charge relay of the active site. Residues Thr-146, Gln-363, His-378, Trp-381, Asn-382, Ser-383, and Glu-386 each contribute to the UDP-alpha-D-glucose site. Residue Ala-401 participates in an anthocyanidin binding. UDP-alpha-D-glucose-binding residues include Glu-402 and Gln-403.

The protein belongs to the UDP-glycosyltransferase family.

It carries out the reaction (R)-mandelonitrile + UDP-alpha-D-glucose = (R)-prunasin + UDP + H(+). Its function is as follows. Involved in the biosynthesis of the cyanogenic glycoside (R)-prunasin, a precursor of (R)-amygdalin, which at high concentrations is associated with intense bitterness in kernels of almond. Stereo-selectively glucosylates (R)-mandelonitrile to produce (R)-prunasin. This Prunus dulcis (Almond) protein is (R)-mandelonitrile beta-glucosyltransferase.